A 518-amino-acid chain; its full sequence is Probable cytochrome P450 317a1 (518 aa).

Position 461 (C461) interacts with heme.

It belongs to the cytochrome P450 family. It depends on heme as a cofactor.

It localises to the endoplasmic reticulum membrane. The protein resides in the microsome membrane. Its function is as follows. May be involved in the metabolism of insect hormones and in the breakdown of synthetic insecticides. The protein is Probable cytochrome P450 317a1 (Cyp317a1) of Drosophila melanogaster (Fruit fly).